The sequence spans 536 residues: Beta-hexosaminidase subunit beta (536 aa).

The signal sequence occupies residues 1–31; that stretch reads MPQSPRSAPGLLLLQALVSLVSLALVAPARL. An N-linked (GlcNAc...) asparagine glycan is attached at N63. C70 and C116 are disulfide-bonded. 2 N-linked (GlcNAc...) asparagine glycosylation sites follow: N169 and N306. Cystine bridges form between C288–C339 and C513–C530. The active-site Proton donor is the E334.

It belongs to the glycosyl hydrolase 20 family. In terms of assembly, there are 3 forms of beta-hexosaminidase: hexosaminidase A is a heterodimer composed of one subunit alpha and one subunit beta (chain A and B); hexosaminidase B is a homodimer of two beta subunits (two chains A and B); hexosaminidase S is a homodimer of two alpha subunits. The composition of the dimer (isozyme A versus isozyme S) has a significant effect on the substrate specificity of the alpha subunit active site.

The protein resides in the lysosome. It is found in the cytoplasmic vesicle. Its subcellular location is the secretory vesicle. It localises to the cortical granule. The enzyme catalyses Hydrolysis of terminal non-reducing N-acetyl-D-hexosamine residues in N-acetyl-beta-D-hexosaminides.. It catalyses the reaction N-acetyl-beta-D-galactosaminyl-(1-&gt;4)-beta-D-3-sulfogalactosyl-(1-&gt;4)-beta-D-glucosyl-(1&lt;-&gt;1')-ceramide + H2O = a beta-D-3-sulfogalactosyl-(1-&gt;4)-beta-D-glucosyl-(1&lt;-&gt;1')-ceramide + N-acetyl-beta-D-galactosamine. It carries out the reaction a ganglioside GM2 (d18:1(4E)) + H2O = a ganglioside GM3 (d18:1(4E)) + N-acetyl-beta-D-galactosamine. The catalysed reaction is a ganglioside GM2 + H2O = a ganglioside GM3 + N-acetyl-beta-D-galactosamine. The enzyme catalyses beta-D-GalNAc-(1-&gt;4)-alpha-L-IdoA-(1-&gt;3)-beta-D-GalNAc-4-sulfate-(1-&gt;4)-alpha-L-IdoA-(1-&gt;3)-D-GalNAc-4-sulfate + H2O = alpha-L-IdoA-(1-&gt;3)-beta-D-GalNAc-4-sulfate-(1-&gt;4)-alpha-L-IdoA-(1-&gt;3)-D-GalNAc-4-sulfate + N-acetyl-D-galactosamine. It catalyses the reaction N-acetyl-beta-D-6-sulfogalactosaminyl-(1-&gt;4)-alpha-L-iduronyl-(1-&gt;3)-N-acetyl-D-6-sulfogalactosamine + H2O = alpha-L-iduronyl-(1-&gt;3)-N-acetyl-D-6-sulfogalactosamine + N-acetyl-D-6-sulfogalactosamine. Addition of GM2A stimulates the hydrolysis of sulfated glycosphingolipid SM2 and the ganglioside GM2. Its function is as follows. Hydrolyzes the non-reducing end N-acetyl-D-hexosamine and/or sulfated N-acetyl-D-hexosamine of glycoconjugates, such as the oligosaccharide moieties from proteins and neutral glycolipids, or from certain mucopolysaccharides. The isozyme B does not hydrolyze each of these substrates, however hydrolyzes efficiently neutral oligosaccharide. Only the isozyme A is responsible for the degradation of GM2 gangliosides in the presence of GM2A. During fertilization is responsible, at least in part, for the zona block to polyspermy. Present in the cortical granules of non-activated oocytes, is exocytosed during the cortical reaction in response to oocyte activation and inactivates the sperm galactosyltransferase-binding site, accounting for the block in sperm binding to the zona pellucida. In Mus musculus (Mouse), this protein is Beta-hexosaminidase subunit beta.